A 161-amino-acid chain; its full sequence is P18 protein (161 aa).

This Lepidoptera (butterflies and moths) protein is P18 protein (P18).